The following is a 118-amino-acid chain: MAGRTVTRVDLCEAVYQKVGLSRTESSAFVELVLKEITDCLERGETVKLSSFGSFLVRQKGQRIGRNPKTGTEVPISPRRVMVFKPSAILKQRINANGAMPMSTEESDENTAQSASGG.

Residues 97 to 118 (NGAMPMSTEESDENTAQSASGG) are disordered.

It belongs to the bacterial histone-like protein family. As to quaternary structure, heterodimer of an alpha and a beta chain.

Functionally, this protein is one of the two subunits of integration host factor, a specific DNA-binding protein that functions in genetic recombination as well as in transcriptional and translational control. The sequence is that of Integration host factor subunit alpha from Rhodopseudomonas palustris (strain ATCC BAA-98 / CGA009).